A 107-amino-acid polypeptide reads, in one-letter code: Dispanin subfamily A member 2b (107 aa).

The Extracellular segment spans residues 1–31 (MEYRTDQVPMSPRSVQGAPGTLPIRDHLPWS). A helical membrane pass occupies residues 32-52 (IFNLFYMNVCCLGLTAMIFSV). Residues C41 and C42 are each lipidated (S-palmitoyl cysteine). Residues 53–77 (KSRDRKVVGDVEGARHYGSTARSLN) lie on the Cytoplasmic side of the membrane. The helical transmembrane segment at 78-98 (IAATVLGILLIIILIGLAATG) threads the bilayer. Residues 99–107 (TIQALKYKG) lie on the Extracellular side of the membrane.

This sequence belongs to the CD225/Dispanin family. As to expression, expressed various cell types in torpedo electric organ and muscle, especially fibroblasts, capillary endothelial cells, and axonal cuff cells.

It localises to the cell membrane. This Torpedo marmorata (Marbled electric ray) protein is Dispanin subfamily A member 2b.